The following is a 556-amino-acid chain: Arginine--tRNA ligase (556 aa).

The short motif at 132-142 is the 'HIGH' region element; sequence ANPTGDLHLGH.

The protein belongs to the class-I aminoacyl-tRNA synthetase family. As to quaternary structure, monomer.

It is found in the cytoplasm. The enzyme catalyses tRNA(Arg) + L-arginine + ATP = L-arginyl-tRNA(Arg) + AMP + diphosphate. The sequence is that of Arginine--tRNA ligase from Listeria welshimeri serovar 6b (strain ATCC 35897 / DSM 20650 / CCUG 15529 / CIP 8149 / NCTC 11857 / SLCC 5334 / V8).